Here is a 464-residue protein sequence, read N- to C-terminus: Keratin, type I cytoskeletal 28 (464 aa).

A head region spans residues 1–85 (MSLQFSNGSR…GSEGGLLSGN (85 aa)). Residues 86 to 121 (EKVTMQNLNDRLASYLDNVRALEEANAELERKIKGW) are coil 1A. Positions 86 to 401 (EKVTMQNLND…RLIDGDGNSC (316 aa)) constitute an IF rod domain. Residues 122–143 (YEKYGPGSCRGLDHDYSRYHLT) form a linker 1 region. The coil 1B stretch occupies residues 144-235 (IEDLKNKIIS…KNHEEEMKAL (92 aa)). A linker 12 region spans residues 236-258 (QCAAGGNVNVEMNAAPGVDLAVL). The interval 259–397 (LNNMRAEYEA…ETYCRLIDGD (139 aa)) is coil 2. The interval 398-464 (GNSCSKSKGF…NGKTEQRVPF (67 aa)) is tail. The disordered stretch occupies residues 443–464 (IHSIEEKTSKMTNGKTEQRVPF).

Belongs to the intermediate filament family. Heterotetramer of two type I and two type II keratins. As to expression, strongly expressed in skin and scalp, and weak expression observed in thymus. In the hair follicle, expressed in Henle layer, Huxley layer and in the irs cuticle. Expression extends from the bulb region up to the point of differentiation into the three layers. Also present in the medulla of beard hair (at protein level).

The protein localises to the cytoplasm. In terms of biological role, essential for the proper assembly of types I and II keratin protein complexes and the formation of keratin intermediate filaments in the inner root sheath (irs). This chain is Keratin, type I cytoskeletal 28, found in Homo sapiens (Human).